We begin with the raw amino-acid sequence, 875 residues long: Acetyl-coenzyme A carboxylase carboxyl transferase subunit alpha, chloroplastic (875 aa).

The transit peptide at 1–50 (MASSSATLVGSTASDLLRSSTTGFTGVPLRTLGRAGLVLKRRDLTVSVTA) directs the protein to the chloroplast. Residues 128 to 380 (EAKYQKALVE…KIAINEAMDE (253 aa)) enclose the CoA carboxyltransferase C-terminal domain. Positions 664 to 705 (LLLDKNKAATRKQELKKKSDEHKEAARLEQELKKKFDEVMDT) form a coiled coil. A disordered region spans residues 845–875 (KEKYENLTRPAGDTLTDDKLREKVGVNRNFS). The span at 860-869 (TDDKLREKVG) shows a compositional bias: basic and acidic residues.

Belongs to the AccA family. In terms of assembly, acetyl-CoA carboxylase is a heterohexamer composed of biotin carboxyl carrier protein, biotin carboxylase and two subunits each of ACCase subunit alpha and ACCase plastid-coded subunit beta (accD).

It is found in the plastid. The protein localises to the chloroplast inner membrane. The enzyme catalyses N(6)-carboxybiotinyl-L-lysyl-[protein] + acetyl-CoA = N(6)-biotinyl-L-lysyl-[protein] + malonyl-CoA. It participates in lipid metabolism; malonyl-CoA biosynthesis; malonyl-CoA from acetyl-CoA: step 1/1. Activated by reductants such as dithiothreitol (DTT), and by thioredoxin in vivo, following exposure to light. In terms of biological role, component of the acetyl coenzyme A carboxylase (ACC) complex. First, biotin carboxylase catalyzes the carboxylation of biotin on its carrier protein (BCCP) and then the CO(2) group is transferred by the carboxyltransferase to acetyl-CoA to form malonyl-CoA. The polypeptide is Acetyl-coenzyme A carboxylase carboxyl transferase subunit alpha, chloroplastic (ACCA) (Pisum sativum (Garden pea)).